The primary structure comprises 452 residues: GPI mannosyltransferase 2 (452 aa).

Residues 1 to 7 (MMEKVTK) are Cytoplasmic-facing. A helical transmembrane segment spans residues 8 to 28 (LALTSRVMVLVVQLLANFATP). At 29–113 (DHKPDVFRMP…HLGIPLSRDA (85 aa)) the chain is on the lumenal side. A helical membrane pass occupies residues 114-134 (LILLVAVALNVLIFCKTANVL). Residues 135 to 161 (YKLTQRMFNDHNKSWNAALIFCFNPAS) are Cytoplasmic-facing. Residues 162–182 (IFFSAAYSETFFAFASFSLML) traverse the membrane as a helical segment. Residues 183-209 (ECMRSEKDFRTFRLGAALTGCFVCRSN) are Lumenal-facing. Residues 210-230 (GLLTLGFPLYFLARHILLSTG) form a helical membrane-spanning segment. Topologically, residues 231–238 (SVQRCWQL) are cytoplasmic. Residues 239–259 (FKMGLAMLVALGILHTYYFYI) traverse the membrane as a helical segment. The Lumenal portion of the chain corresponds to 260–284 (YRLYCLPDVKVQHAQHVVDYAKERS). The chain crosses the membrane as a helical span at residues 285 to 305 (FLISGQASVGSPWCGYTLPFP). The Cytoplasmic portion of the chain corresponds to 306–327 (YTYVQSHYWDVGFLRYYKWKQL). Residues 328 to 348 (PNFLLALPMLLFMHWHCYDYI) form a helical membrane-spanning segment. Topologically, residues 349 to 370 (RKLVANTWSKISPSEYQGILKE) are lumenal. Residues 371–391 (HISFPFVLHAAVLTLVCTLYV) traverse the membrane as a helical segment. At 392–398 (HIQVSTR) the chain is on the cytoplasmic side. The helical transmembrane segment at 399-419 (LLASATPVFYWFAADYMPNTF) threads the bilayer. The Lumenal portion of the chain corresponds to 420–426 (QLSFRSK). A helical membrane pass occupies residues 427-447 (AGVLFIWCLTYSLVGTVLFSN). The Cytoplasmic segment spans residues 448–452 (NYPWT).

It belongs to the PIGV family.

It localises to the endoplasmic reticulum membrane. It functions in the pathway glycolipid biosynthesis; glycosylphosphatidylinositol-anchor biosynthesis. Its function is as follows. Mannosyltransferase involved in glycosylphosphatidylinositol-anchor biosynthesis. Transfers the second mannose to the glycosylphosphatidylinositol during GPI precursor assembly. Required for the GPI-mediated endoplasmic reticulum exit and proper targeting to the cell surface of chp. Required for GPI-mediated membrane attachment of chp, qsm and Cont. Essential for microvillar stability in the rhabdomere. This chain is GPI mannosyltransferase 2, found in Drosophila pseudoobscura pseudoobscura (Fruit fly).